The chain runs to 356 residues: Peptide chain release factor 1 (356 aa).

Position 232 is an N5-methylglutamine (Gln-232).

It belongs to the prokaryotic/mitochondrial release factor family. In terms of processing, methylated by PrmC. Methylation increases the termination efficiency of RF1.

The protein localises to the cytoplasm. In terms of biological role, peptide chain release factor 1 directs the termination of translation in response to the peptide chain termination codons UAG and UAA. This Thermoanaerobacter pseudethanolicus (strain ATCC 33223 / 39E) (Clostridium thermohydrosulfuricum) protein is Peptide chain release factor 1.